The chain runs to 239 residues: MGRKWNNIKEKKASKDANTSRIYAKFGREIYVAAKQGEPDPELNQNLKFVLERAKTYNVPKAIIERAIEKAKGGSEENYDELRYEGFGPNGAMVIVDALTNNVNRTAADVRSTFGKNGGNMGVSGSVAYMFDPTAVIGFEGKTADETLELLMEADIDVRDILEEDDAVIVYAEPDQFHAVQEALQNAGITEFTVAELTMLAQNDVALPEDARAQFEKLIDALEDLEDVQQVYHNVDLGA.

This sequence belongs to the TACO1 family. YeeN subfamily.

The protein localises to the cytoplasm. This is Probable transcriptional regulatory protein BLi00754/BL02339 from Bacillus licheniformis (strain ATCC 14580 / DSM 13 / JCM 2505 / CCUG 7422 / NBRC 12200 / NCIMB 9375 / NCTC 10341 / NRRL NRS-1264 / Gibson 46).